The following is a 221-amino-acid chain: Sentrin-specific protease 8 (221 aa).

M1 is subject to N-acetylmethionine. The interval 11–174 is protease; it reads SLLRQSDVSL…MYVICNTEAL (164 aa). Active-site residues include H102 and D119. C163 (nucleophile) is an active-site residue.

Belongs to the peptidase C48 family.

Protease that catalyzes two essential functions in the NEDD8 pathway: processing of full-length NEDD8 to its mature form and deconjugation of NEDD8 from targeted proteins such as cullins or p53. This Mus musculus (Mouse) protein is Sentrin-specific protease 8 (Senp8).